Reading from the N-terminus, the 393-residue chain is Glycocyamine kinase (393 aa).

Positions 7–94 (REKFAKENFP…FDRVIEEIHH (88 aa)) constitute a Phosphagen kinase N-terminal domain. A Phosphagen kinase C-terminal domain is found at 120–362 (YVKSCRIRCG…NVLIEADKRL (243 aa)). Residues 123 to 127 (SCRIR), His-186, Arg-231, 287 to 291 (RASVH), 315 to 320 (RGTGGE), and Asp-330 each bind ATP. Residues 367 to 393 (PIDDLTPRLNSSTGTSISATASRHMTL) are disordered. Positions 377–393 (SSTGTSISATASRHMTL) are enriched in low complexity.

This sequence belongs to the ATP:guanido phosphotransferase family. Monomer.

It carries out the reaction guanidinoacetate + ATP = phosphoguanidinoacetate + ADP + H(+). The protein is Glycocyamine kinase of Hediste diversicolor (Sandworm).